A 290-amino-acid polypeptide reads, in one-letter code: uncharacterized protein (290 aa).

Disordered stretches follow at residues 1–98 (MLGQ…SRRV) and 209–236 (LSGQ…AATT). Over residues 63–76 (KPDRVRPGQRDRIG) the composition is skewed to basic and acidic residues. The segment covering 87–97 (AGQARAASSRR) has biased composition (low complexity). The helical transmembrane segment at 261 to 281 (CILTALLAVSFHSIGVVIMTS) threads the bilayer.

Its subcellular location is the membrane. This is an uncharacterized protein from Homo sapiens (Human).